The primary structure comprises 290 residues: ATP synthase gamma chain (290 aa).

Belongs to the ATPase gamma chain family. As to quaternary structure, F-type ATPases have 2 components, CF(1) - the catalytic core - and CF(0) - the membrane proton channel. CF(1) has five subunits: alpha(3), beta(3), gamma(1), delta(1), epsilon(1). CF(0) has three main subunits: a, b and c.

It localises to the cell inner membrane. Its function is as follows. Produces ATP from ADP in the presence of a proton gradient across the membrane. The gamma chain is believed to be important in regulating ATPase activity and the flow of protons through the CF(0) complex. This chain is ATP synthase gamma chain, found in Buchnera aphidicola subsp. Acyrthosiphon pisum (strain APS) (Acyrthosiphon pisum symbiotic bacterium).